Here is a 138-residue protein sequence, read N- to C-terminus: Basic phospholipase A2 homolog bothropstoxin-II (138 aa).

A signal peptide spans 1 to 16; the sequence is MRTLWIMAVLLVGVEG. 7 disulfide bridges follow: cysteine 42–cysteine 131, cysteine 44–cysteine 60, cysteine 59–cysteine 111, cysteine 65–cysteine 138, cysteine 66–cysteine 104, cysteine 73–cysteine 97, and cysteine 91–cysteine 102. An important for membrane-damaging activities in eukaryotes and bacteria; heparin-binding region spans residues 121-133; sequence KRYMAYPDVLCKK.

The protein belongs to the phospholipase A2 family. Group II subfamily. D49 sub-subfamily. Homodimer; non-covalently linked (probable alternative/compact dimer conformation). Expressed by the venom gland.

The protein localises to the secreted. Functionally, snake venom phospholipase A2 (PLA2) that shows low enzymatic activity even tough it conserves the catalytic residues. Shows a strong myotoxic activity and induces indirect hemolysis, anticoagulant properties, and cytotoxic activities. In vivo, it induces muscle necrosis, accompanied by polymorphonuclear cell infiltration, and edema in the mouse paw. It exerts its function even in the absence of extracellular calcium, indicating it is not a calcium-dependent enzyme. A model of myotoxic mechanism has been proposed: an apo Lys49-PLA2 is activated by the entrance of a hydrophobic molecule (e.g. fatty acid) at the hydrophobic channel of the protein leading to a reorientation of a monomer. This reorientation causes a transition between 'inactive' to 'active' states, causing alignment of C-terminal and membrane-docking sites (MDoS) side-by-side and putting the membrane-disruption sites (MDiS) in the same plane, exposed to solvent and in a symmetric position for both monomers. The MDoS region stabilizes the toxin on membrane by the interaction of charged residues with phospholipid head groups. Subsequently, the MDiS region destabilizes the membrane with penetration of hydrophobic residues. This insertion causes a disorganization of the membrane, allowing an uncontrolled influx of ions (i.e. calcium and sodium), and eventually triggering irreversible intracellular alterations and cell death. In Bothrops jararacussu (Jararacussu), this protein is Basic phospholipase A2 homolog bothropstoxin-II.